The sequence spans 98 residues: Carboxysome shell protein CsoS1C (98 aa).

The BMC domain occupies 8 to 93 (ALGMIETRGL…VHSEVENILP (86 aa)).

This sequence belongs to the bacterial microcompartments protein family. CsoS1 subfamily. In terms of assembly, homohexamer with a small central pore. Interacts with the N-terminus (residues 1-136) of RuBisCO (CbbL).

It localises to the carboxysome. In terms of biological role, one of shell proteins of the carboxysome, a polyhedral inclusion where RuBisCO (ribulose bisphosphate carboxylase, ccbL-ccbS) is sequestered. Assembles into hexamers which make sheets that form the facets of the polyhedral carboxysome. The shell probably limits the diffusion of CO(2) into and out of the carboxysome. There are estimated to be 2970 CsoS1A/CsoS1C proteins per carboxysome (the proteins differ by only 1 residue). Its function is as follows. Unlike beta-carboxysomes, alpha-carboxysomes (Cb) can form without cargo protein. CsoS2 is essential for Cb formation and is also capable of targeting foreign proteins to the Cb. The Cb shell assembles with the aid of CsoS2; CsoS1A, CsoS1B and CsoS1C form the majority of the shell while CsoS4A and CsoS4B form vertices. CsoS1D forms pseudohexamers that probably control metabolite flux into and out of the shell. The sequence is that of Carboxysome shell protein CsoS1C from Halothiobacillus neapolitanus (strain ATCC 23641 / c2) (Thiobacillus neapolitanus).